The primary structure comprises 163 residues: 3-hydroxyacyl-[acyl-carrier-protein] dehydratase FabZ (163 aa).

H64 is a catalytic residue.

It belongs to the thioester dehydratase family. FabZ subfamily.

It localises to the cytoplasm. It carries out the reaction a (3R)-hydroxyacyl-[ACP] = a (2E)-enoyl-[ACP] + H2O. Its function is as follows. Involved in unsaturated fatty acids biosynthesis. Catalyzes the dehydration of short chain beta-hydroxyacyl-ACPs and long chain saturated and unsaturated beta-hydroxyacyl-ACPs. In Caulobacter sp. (strain K31), this protein is 3-hydroxyacyl-[acyl-carrier-protein] dehydratase FabZ.